We begin with the raw amino-acid sequence, 246 residues long: DNA repair protein RecO (246 aa).

It belongs to the RecO family.

Its function is as follows. Involved in DNA repair and RecF pathway recombination. This Nitrosococcus oceani (strain ATCC 19707 / BCRC 17464 / JCM 30415 / NCIMB 11848 / C-107) protein is DNA repair protein RecO.